The following is a 157-amino-acid chain: Protein Smg (157 aa).

It belongs to the Smg family.

The polypeptide is Protein Smg (Enterobacter sp. (strain 638)).